A 161-amino-acid polypeptide reads, in one-letter code: Phosphopantetheine adenylyltransferase (161 aa).

A substrate-binding site is contributed by T10. ATP-binding positions include 10–11 and H18; that span reads TF. Substrate contacts are provided by K42, L74, and R88. Residues 89–91, E99, and 124–130 contribute to the ATP site; these read GLR and NSFISST.

It belongs to the bacterial CoaD family. Homohexamer. Requires Mg(2+) as cofactor.

It is found in the cytoplasm. It carries out the reaction (R)-4'-phosphopantetheine + ATP + H(+) = 3'-dephospho-CoA + diphosphate. Its pathway is cofactor biosynthesis; coenzyme A biosynthesis; CoA from (R)-pantothenate: step 4/5. Reversibly transfers an adenylyl group from ATP to 4'-phosphopantetheine, yielding dephospho-CoA (dPCoA) and pyrophosphate. This Photobacterium profundum (strain SS9) protein is Phosphopantetheine adenylyltransferase.